We begin with the raw amino-acid sequence, 1036 residues long: Protein translocase subunit SecA, chloroplastic (1036 aa).

The transit peptide at 1–76 directs the protein to the chloroplast; that stretch reads MESCARSASQ…KIGELMQVRA (76 aa). ATP is bound at residue 186 to 193; that stretch reads MRTGEGKT. A disordered region spans residues 995-1036; it reads NQEQQQKGKPDSSNVENKRIGDANLNPVSVTESPSSDSPQNT. Residues 1000–1015 show a composition bias toward basic and acidic residues; it reads QKGKPDSSNVENKRIG. Residues 1020–1036 are compositionally biased toward polar residues; it reads NPVSVTESPSSDSPQNT.

It belongs to the SecA family.

Its subcellular location is the plastid. It localises to the chloroplast stroma. It is found in the chloroplast thylakoid membrane. The enzyme catalyses ATP + H2O + chloroplast-proteinSide 1 = ADP + phosphate + chloroplast-proteinSide 2.. In terms of biological role, has a central role in coupling the hydrolysis of ATP to the transfer of proteins across the thylakoid membrane. In Spinacia oleracea (Spinach), this protein is Protein translocase subunit SecA, chloroplastic.